Reading from the N-terminus, the 126-residue chain is Large ribosomal subunit protein bL20c (126 aa).

Belongs to the bacterial ribosomal protein bL20 family.

The protein localises to the plastid. Its subcellular location is the chloroplast. Binds directly to 23S ribosomal RNA and is necessary for the in vitro assembly process of the 50S ribosomal subunit. It is not involved in the protein synthesizing functions of that subunit. The sequence is that of Large ribosomal subunit protein bL20c from Illicium oligandrum (Star anise).